The sequence spans 84 residues: MVKIRLSRFGSAHNPHYRIVVADVRRPRDGGYIESLGHYDPRKTSENFLKIDVERANHWIAQGAQPTDTARRLLRSQGVKISKK.

The protein belongs to the bacterial ribosomal protein bS16 family.

In Deinococcus radiodurans (strain ATCC 13939 / DSM 20539 / JCM 16871 / CCUG 27074 / LMG 4051 / NBRC 15346 / NCIMB 9279 / VKM B-1422 / R1), this protein is Small ribosomal subunit protein bS16.